Here is a 324-residue protein sequence, read N- to C-terminus: ATP-dependent 6-phosphofructokinase (324 aa).

Residue G15 participates in ATP binding. 25–29 (RGVVR) contacts ADP. ATP-binding positions include 76-77 (RF) and 106-109 (GDGS). Residue D107 coordinates Mg(2+). 130–132 (TID) serves as a coordination point for substrate. The active-site Proton acceptor is D132. R159 contributes to the ADP binding site. Substrate contacts are provided by residues R167 and 174–176 (MGR). Residues 190–192 (GCE), K216, and 218–220 (KRH) each bind ADP. Substrate is bound by residues E227, R248, and 254 to 257 (HIQR).

It belongs to the phosphofructokinase type A (PFKA) family. ATP-dependent PFK group I subfamily. Prokaryotic clade 'B1' sub-subfamily. In terms of assembly, homotetramer. Mg(2+) serves as cofactor.

It is found in the cytoplasm. The enzyme catalyses beta-D-fructose 6-phosphate + ATP = beta-D-fructose 1,6-bisphosphate + ADP + H(+). It functions in the pathway carbohydrate degradation; glycolysis; D-glyceraldehyde 3-phosphate and glycerone phosphate from D-glucose: step 3/4. Allosterically activated by ADP and other diphosphonucleosides, and allosterically inhibited by phosphoenolpyruvate. Its function is as follows. Catalyzes the phosphorylation of D-fructose 6-phosphate to fructose 1,6-bisphosphate by ATP, the first committing step of glycolysis. The chain is ATP-dependent 6-phosphofructokinase from Actinobacillus pleuropneumoniae serotype 5b (strain L20).